Here is a 397-residue protein sequence, read N- to C-terminus: S-adenosylmethionine synthase (397 aa).

Histidine 17 contacts ATP. Aspartate 19 contacts Mg(2+). Glutamate 45 lines the K(+) pocket. Glutamate 58 and glutamine 101 together coordinate L-methionine. The flexible loop stretch occupies residues 101-111 (QSPDIAQGVDK). ATP contacts are provided by residues 176 to 178 (DGK), 243 to 244 (RF), aspartate 252, 258 to 259 (RK), and lysine 279. Position 252 (aspartate 252) interacts with L-methionine. L-methionine is bound at residue lysine 283.

This sequence belongs to the AdoMet synthase family. Homotetramer; dimer of dimers. Requires Mg(2+) as cofactor. It depends on K(+) as a cofactor.

It localises to the cytoplasm. It catalyses the reaction L-methionine + ATP + H2O = S-adenosyl-L-methionine + phosphate + diphosphate. It participates in amino-acid biosynthesis; S-adenosyl-L-methionine biosynthesis; S-adenosyl-L-methionine from L-methionine: step 1/1. In terms of biological role, catalyzes the formation of S-adenosylmethionine (AdoMet) from methionine and ATP. The overall synthetic reaction is composed of two sequential steps, AdoMet formation and the subsequent tripolyphosphate hydrolysis which occurs prior to release of AdoMet from the enzyme. The polypeptide is S-adenosylmethionine synthase (Staphylococcus aureus (strain MRSA252)).